The following is a 122-amino-acid chain: Large ribosomal subunit protein uL14 (122 aa).

This sequence belongs to the universal ribosomal protein uL14 family. In terms of assembly, part of the 50S ribosomal subunit. Forms a cluster with proteins L3 and L19. In the 70S ribosome, L14 and L19 interact and together make contacts with the 16S rRNA in bridges B5 and B8.

Its function is as follows. Binds to 23S rRNA. Forms part of two intersubunit bridges in the 70S ribosome. This is Large ribosomal subunit protein uL14 from Dehalococcoides mccartyi (strain ATCC BAA-2100 / JCM 16839 / KCTC 5957 / BAV1).